Consider the following 101-residue polypeptide: NAD(P)H-quinone oxidoreductase subunit 4L, chloroplastic (101 aa).

3 helical membrane-spanning segments follow: residues 2-22 (MLEHVLVLSAYLFSIGIYGLI), 32-52 (MCLELILNAVNLNFVTFSDFF), and 61-81 (IFSIFVIAIAAAEAAIGPAIV).

This sequence belongs to the complex I subunit 4L family. In terms of assembly, NDH is composed of at least 16 different subunits, 5 of which are encoded in the nucleus.

The protein resides in the plastid. The protein localises to the chloroplast thylakoid membrane. It catalyses the reaction a plastoquinone + NADH + (n+1) H(+)(in) = a plastoquinol + NAD(+) + n H(+)(out). The enzyme catalyses a plastoquinone + NADPH + (n+1) H(+)(in) = a plastoquinol + NADP(+) + n H(+)(out). In terms of biological role, NDH shuttles electrons from NAD(P)H:plastoquinone, via FMN and iron-sulfur (Fe-S) centers, to quinones in the photosynthetic chain and possibly in a chloroplast respiratory chain. The immediate electron acceptor for the enzyme in this species is believed to be plastoquinone. Couples the redox reaction to proton translocation, and thus conserves the redox energy in a proton gradient. This is NAD(P)H-quinone oxidoreductase subunit 4L, chloroplastic from Manihot esculenta (Cassava).